We begin with the raw amino-acid sequence, 130 residues long: Large ribosomal subunit protein bL20 (130 aa).

This sequence belongs to the bacterial ribosomal protein bL20 family.

Binds directly to 23S ribosomal RNA and is necessary for the in vitro assembly process of the 50S ribosomal subunit. It is not involved in the protein synthesizing functions of that subunit. This chain is Large ribosomal subunit protein bL20, found in Nocardioides sp. (strain ATCC BAA-499 / JS614).